A 254-amino-acid chain; its full sequence is Alcohol dehydrogenase (254 aa).

Position 10 to 33 (10 to 33 (FVAGLGGIGLDTSREIVKSGPKNL)) interacts with NAD(+). Position 138 (Ser138) interacts with substrate. The active-site Proton acceptor is Tyr151.

Belongs to the short-chain dehydrogenases/reductases (SDR) family. As to quaternary structure, homodimer.

The enzyme catalyses a primary alcohol + NAD(+) = an aldehyde + NADH + H(+). It catalyses the reaction a secondary alcohol + NAD(+) = a ketone + NADH + H(+). This Drosophila planitibia (Fruit fly) protein is Alcohol dehydrogenase (Adh).